A 77-amino-acid chain; its full sequence is U8-hexatoxin-Mg1a (77 aa).

The signal sequence occupies residues 1-22; sequence MKVFSFTIGLVVIISLFAFALA. Positions 23–43 are excised as a propeptide; sequence YDEETDLMKKLVEMERAIEQR. Intrachain disulfides connect C46/C60, C53/C65, and C59/C76.

In terms of tissue distribution, expressed by the venom gland.

It localises to the secreted. Its function is as follows. Intrathorax injection into crickets causes paralysis prolonged for more than 60 minutes, followed by recovery. In Macrothele gigas (Japanese funnel web spider), this protein is U8-hexatoxin-Mg1a.